A 1214-amino-acid polypeptide reads, in one-letter code: Receptor-type guanylate cyclase gcy-19 (1214 aa).

The N-terminal stretch at 1 to 18 is a signal peptide; that stretch reads MEHLIFLLIFGGYSPSIA. Residues 19–517 lie on the Extracellular side of the membrane; the sequence is QITSSTTTTT…PQTFVDQYGA (499 aa). Residues N85, N363, N441, and N464 are each glycosylated (N-linked (GlcNAc...) asparagine). A helical membrane pass occupies residues 518–538; that stretch reads LVFSIGGVLALAMLFLITCFF. Residues 539–1214 lie on the Cytoplasmic side of the membrane; the sequence is YVLRQRKLER…FRRQETLALM (676 aa). The region spanning 572-859 is the Protein kinase domain; sequence RMSKRSIQSG…KGNLMDHVFN (288 aa). Positions 917–1047 constitute a Guanylate cyclase domain; the sequence is TVFFSDVVKF…DTVNTASRME (131 aa). The interval 1116–1197 is disordered; sequence NSSNMAYNPE…EKAREIHNEE (82 aa). Over residues 1133-1142 the composition is skewed to acidic residues; that stretch reads DDEDVDDESS. Residues 1186-1197 show a composition bias toward basic and acidic residues; that stretch reads LEEKAREIHNEE.

This sequence belongs to the adenylyl cyclase class-4/guanylyl cyclase family. In terms of tissue distribution, expressed asymmetrically in ASE right (ASER) sensory neuron.

It is found in the cell membrane. It catalyses the reaction GTP = 3',5'-cyclic GMP + diphosphate. In terms of biological role, guanylate cyclase involved in the production of the second messenger cGMP. This is Receptor-type guanylate cyclase gcy-19 from Caenorhabditis briggsae.